A 2294-amino-acid chain; its full sequence is Reducing polyketide synthase BOA9 (2294 aa).

The region spanning 4–409 is the Ketosynthase family 3 (KS3) domain; it reads PEPVAIIGMG…GANATAIVEA (406 aa). The malonyl-CoA:ACP transacylase (MAT) domain stretch occupies residues 537–853; sequence IFTGQGAQNA…DYAATLVRGQ (317 aa). S630 functions as the For malonyltransferase activity in the catalytic mechanism. The interval 930-1067 is N-terminal hotdog fold; the sequence is HDLLGAILPG…GTVTKKKAVT (138 aa). The tract at residues 930–1104 is dehydratase (DH) domain; it reads HDLLGAILPG…LNYGPAFNGL (175 aa). One can recognise a PKS/mFAS DH domain in the interval 930 to 1236; the sequence is HDLLGAILPG…CTQYSEALDD (307 aa). H962 functions as the Proton acceptor; for dehydratase activity in the catalytic mechanism. The C-terminal hotdog fold stretch occupies residues 1078–1236; sequence QEPKAARTWY…CTQYSEALDD (159 aa). D1142 functions as the Proton donor; for dehydratase activity in the catalytic mechanism. The enoyl reductase (ER) domain stretch occupies residues 1618 to 1908; that stretch reads GIFDTIHFKD…KNSRIGRVVV (291 aa). The tract at residues 1934 to 2107 is ketoreductase (KR) domain; that stretch reads VHTYLLGVLE…LPATTISLTV (174 aa). The Carrier domain maps to 2214-2292; that stretch reads LLLPDILEMI…SLAKKIYDIR (79 aa). S2251 bears the O-(pantetheine 4'-phosphoryl)serine mark.

It participates in polyketide biosynthesis. Its function is as follows. Reducing polyketide synthase; part of the gene cluster B that mediates the biosynthesis of botcinic acid and its botcinin derivatives, acetate-derived polyketides that contribute to virulence when combined with the sesquiterpene botrydial. Botcinic acid and its derivatives have been shown to induce chlorosis and necrosis during host plant infection, but also have antifungal activities. Two polyketide synthases, BOA6 and BOA9, are involved in the biosynthesis of botcinins. BOA6 mediates the formation of the per-methylated tetraketide core by condensation of four units of malonyl-CoA with one unit of acetyl-CoA, which would be methylated in activated methylene groups to yield a bicyclic acid intermediate that could then either be converted to botrylactone derivatives or lose the starter acetate unit through a retro-Claisen type C-C bond cleavage to yield botcinin derivatives. The second polyketide synthase, BOA9, is probably required for the biosynthesis of the tetraketide side chain of botcinins. The methyltransferase (MT) domain within BOA6 is probably responsible for the incorporation of four methyl groups. The trans-enoyl reductase BOA5 might take over the enoyl reductase function of BOA6 that misses an ER domain. The monooxygenases BOA2, BOA3 and BOA4 might be involved in further hydroxylations at C4, C5 and C8, whereas BOA7, close to BOA9, could potentially be involved in the hydroxylation at C4 in the side chain of botcinins. This chain is Reducing polyketide synthase BOA9, found in Botryotinia fuckeliana (strain B05.10) (Noble rot fungus).